The following is a 448-amino-acid chain: N-succinylarginine dihydrolase (448 aa).

Residues 19-28, N110, and 137-138 each bind substrate; these read AGLSSGNIAS and HR. The active site involves E174. Substrate is bound at residue R216. H252 is a catalytic residue. Substrate contacts are provided by D254 and N366. Residue C372 is the Nucleophile of the active site.

It belongs to the succinylarginine dihydrolase family. In terms of assembly, homodimer.

The catalysed reaction is N(2)-succinyl-L-arginine + 2 H2O + 2 H(+) = N(2)-succinyl-L-ornithine + 2 NH4(+) + CO2. The protein operates within amino-acid degradation; L-arginine degradation via AST pathway; L-glutamate and succinate from L-arginine: step 2/5. In terms of biological role, catalyzes the hydrolysis of N(2)-succinylarginine into N(2)-succinylornithine, ammonia and CO(2). This Legionella pneumophila (strain Corby) protein is N-succinylarginine dihydrolase.